The sequence spans 143 residues: Transcriptional regulator MraZ (143 aa).

2 SpoVT-AbrB domains span residues 5 to 47 and 76 to 119; these read EYQH…PQEE and ASEC…SKSE.

The protein belongs to the MraZ family. Forms oligomers.

It localises to the cytoplasm. Its subcellular location is the nucleoid. The protein is Transcriptional regulator MraZ of Listeria welshimeri serovar 6b (strain ATCC 35897 / DSM 20650 / CCUG 15529 / CIP 8149 / NCTC 11857 / SLCC 5334 / V8).